Here is a 64-residue protein sequence, read N- to C-terminus: Copper-metallothionein (64 aa).

Position 1 is an N-acetylserine (S1). Cu(+) is bound by residues C7, C11, C16, C18, C22, C24, C28, C30, C33, C36, C38, C43, C45, C49, C55, C57, C61, and C63.

The protein belongs to the metallothionein superfamily. Type 2 family.

The metallothioneins are involved in the cellular sequestration of toxic metal ions and regulation of essential trace elements. This isoform binds exclusively copper. This is Copper-metallothionein from Helix pomatia (Roman snail).